A 604-amino-acid polypeptide reads, in one-letter code: Ectonucleoside triphosphate diphosphohydrolase 7 (604 aa).

Residues 1–28 (MARISFSYLCPASWYFTVPTVSPFLRQR) are Cytoplasmic-facing. A helical membrane pass occupies residues 29-49 (VAFLGLFFISCLLLLMLIIDF). Residues 50–546 (RHWSASLPRD…QAHGSWFRLS (497 aa)) are Vesicular-facing. The active-site Proton acceptor is Glu217. A glycan (N-linked (GlcNAc...) asparagine) is linked at Asn330. A disulfide bridge connects residues Cys448 and Cys477. The helical transmembrane segment at 547-567 (FVYNHYLFFACILVVLLAIFL) threads the bilayer. At 568-604 (YLLRLRRIHHRQTRASAPLDLLWLEEVVPMMGVQVGP) the chain is on the cytoplasmic side.

It belongs to the GDA1/CD39 NTPase family. Ca(2+) serves as cofactor. It depends on Mg(2+) as a cofactor.

It localises to the cytoplasmic vesicle membrane. It carries out the reaction a ribonucleoside 5'-triphosphate + H2O = a ribonucleoside 5'-diphosphate + phosphate + H(+). The enzyme catalyses UTP + H2O = UDP + phosphate + H(+). It catalyses the reaction GTP + H2O = GDP + phosphate + H(+). The catalysed reaction is CTP + H2O = CDP + phosphate + H(+). Functionally, catalyzes the hydrolysis of nucleoside triphosphates and diphosphates in a calcium- or magnesium-dependent manner. Preferentially hydrolyzes nucleoside 5'-triphosphates, with substrate preference for UTP &gt; GTP &gt; CTP. Hydrolyzes ATP and nucleoside diphosphates only to a minor extent. The chain is Ectonucleoside triphosphate diphosphohydrolase 7 (ENTPD7) from Homo sapiens (Human).